The following is a 617-amino-acid chain: Dihydroxy-acid dehydratase (617 aa).

Residue D81 participates in Mg(2+) binding. C122 is a binding site for [2Fe-2S] cluster. Mg(2+)-binding residues include D123 and K124. K124 bears the N6-carboxylysine mark. C195 is a [2Fe-2S] cluster binding site. E490 contributes to the Mg(2+) binding site. The active-site Proton acceptor is the S516.

This sequence belongs to the IlvD/Edd family. As to quaternary structure, homodimer. The cofactor is [2Fe-2S] cluster. It depends on Mg(2+) as a cofactor.

It carries out the reaction (2R)-2,3-dihydroxy-3-methylbutanoate = 3-methyl-2-oxobutanoate + H2O. It catalyses the reaction (2R,3R)-2,3-dihydroxy-3-methylpentanoate = (S)-3-methyl-2-oxopentanoate + H2O. It functions in the pathway amino-acid biosynthesis; L-isoleucine biosynthesis; L-isoleucine from 2-oxobutanoate: step 3/4. Its pathway is amino-acid biosynthesis; L-valine biosynthesis; L-valine from pyruvate: step 3/4. Its function is as follows. Functions in the biosynthesis of branched-chain amino acids. Catalyzes the dehydration of (2R,3R)-2,3-dihydroxy-3-methylpentanoate (2,3-dihydroxy-3-methylvalerate) into 2-oxo-3-methylpentanoate (2-oxo-3-methylvalerate) and of (2R)-2,3-dihydroxy-3-methylbutanoate (2,3-dihydroxyisovalerate) into 2-oxo-3-methylbutanoate (2-oxoisovalerate), the penultimate precursor to L-isoleucine and L-valine, respectively. The sequence is that of Dihydroxy-acid dehydratase from Acidiphilium cryptum (strain JF-5).